The chain runs to 69 residues: Putative membrane protein insertion efficiency factor (69 aa).

It belongs to the UPF0161 family.

The protein resides in the cell inner membrane. Functionally, could be involved in insertion of integral membrane proteins into the membrane. The chain is Putative membrane protein insertion efficiency factor from Chromobacterium violaceum (strain ATCC 12472 / DSM 30191 / JCM 1249 / CCUG 213 / NBRC 12614 / NCIMB 9131 / NCTC 9757 / MK).